A 344-amino-acid chain; its full sequence is Holliday junction branch migration complex subunit RuvB (344 aa).

The segment at M1–Y183 is large ATPase domain (RuvB-L). Residues L22, R23, G64, K67, T68, T69, E130 to F132, R173, Y183, and R220 each bind ATP. Residue T68 coordinates Mg(2+). The tract at residues N184–D254 is small ATPAse domain (RuvB-S). The tract at residues R257 to A344 is head domain (RuvB-H). DNA is bound by residues R312 and R317.

This sequence belongs to the RuvB family. As to quaternary structure, homohexamer. Forms an RuvA(8)-RuvB(12)-Holliday junction (HJ) complex. HJ DNA is sandwiched between 2 RuvA tetramers; dsDNA enters through RuvA and exits via RuvB. An RuvB hexamer assembles on each DNA strand where it exits the tetramer. Each RuvB hexamer is contacted by two RuvA subunits (via domain III) on 2 adjacent RuvB subunits; this complex drives branch migration. In the full resolvosome a probable DNA-RuvA(4)-RuvB(12)-RuvC(2) complex forms which resolves the HJ.

Its subcellular location is the cytoplasm. It catalyses the reaction ATP + H2O = ADP + phosphate + H(+). Functionally, the RuvA-RuvB-RuvC complex processes Holliday junction (HJ) DNA during genetic recombination and DNA repair, while the RuvA-RuvB complex plays an important role in the rescue of blocked DNA replication forks via replication fork reversal (RFR). RuvA specifically binds to HJ cruciform DNA, conferring on it an open structure. The RuvB hexamer acts as an ATP-dependent pump, pulling dsDNA into and through the RuvAB complex. RuvB forms 2 homohexamers on either side of HJ DNA bound by 1 or 2 RuvA tetramers; 4 subunits per hexamer contact DNA at a time. Coordinated motions by a converter formed by DNA-disengaged RuvB subunits stimulates ATP hydrolysis and nucleotide exchange. Immobilization of the converter enables RuvB to convert the ATP-contained energy into a lever motion, pulling 2 nucleotides of DNA out of the RuvA tetramer per ATP hydrolyzed, thus driving DNA branch migration. The RuvB motors rotate together with the DNA substrate, which together with the progressing nucleotide cycle form the mechanistic basis for DNA recombination by continuous HJ branch migration. Branch migration allows RuvC to scan DNA until it finds its consensus sequence, where it cleaves and resolves cruciform DNA. The sequence is that of Holliday junction branch migration complex subunit RuvB from Solibacter usitatus (strain Ellin6076).